The sequence spans 301 residues: Olfactory receptor 10AG1 (301 aa).

The Extracellular segment spans residues 1–16; sequence MEFVLLGFSDIPNLHW. The chain crosses the membrane as a helical span at residues 17–37; it reads MLFSIFLLMYLMILMCNGIII. Residues 38–45 lie on the Cytoplasmic side of the membrane; the sequence is LLIKIHPA. The helical transmembrane segment at 46 to 66 threads the bilayer; that stretch reads LQTPMYFFLSNFSLLEICYVT. At 67 to 90 the chain is on the extracellular side; it reads IIIPRMLMDIWTQKGNISLFACAT. An N-linked (GlcNAc...) asparagine glycan is attached at Asn-82. Cys-88 and Cys-180 are disulfide-bonded. A helical membrane pass occupies residues 91–111; it reads QMCFFLMLGGTECLLLTVMAY. Residues 112–130 lie on the Cytoplasmic side of the membrane; the sequence is DRYVAICKPLQYPLVMNHK. The chain crosses the membrane as a helical span at residues 131 to 151; it reads VCIQLIIASWTITIPVVIGET. Residues 152–188 lie on the Extracellular side of the membrane; the sequence is CQIFLLPFCGTNTINHFFCDIPPILKLACGNIFVNEI. A helical transmembrane segment spans residues 189–208; that stretch reads TVHVVAVVFITVPFLLIVVS. Over 209–228 the chain is Cytoplasmic; the sequence is YGKIISNILKLSSARGKAKA. Residues 229-249 form a helical membrane-spanning segment; it reads FSTCSSHLIVVILFFGAGTIT. The Extracellular portion of the chain corresponds to 250–262; that stretch reads YLQPKPHQFQRMG. A helical membrane pass occupies residues 263–283; the sequence is KLISLFYTILIPTLNPIIYTL. At 284–301 the chain is on the cytoplasmic side; the sequence is RNKDIMVALRKLLAKLLT.

It belongs to the G-protein coupled receptor 1 family.

It localises to the cell membrane. In terms of biological role, odorant receptor. The protein is Olfactory receptor 10AG1 (OR10AG1) of Homo sapiens (Human).